A 200-amino-acid polypeptide reads, in one-letter code: Pyridoxal 5'-phosphate synthase subunit PdxT (200 aa).

An L-glutamine-binding site is contributed by 52-54 (GES). Cysteine 84 acts as the Nucleophile in catalysis. Residues arginine 116 and 145–146 (IR) each bind L-glutamine. Catalysis depends on charge relay system residues histidine 181 and glutamate 183.

Belongs to the glutaminase PdxT/SNO family. In terms of assembly, in the presence of PdxS, forms a dodecamer of heterodimers. Only shows activity in the heterodimer.

It carries out the reaction aldehydo-D-ribose 5-phosphate + D-glyceraldehyde 3-phosphate + L-glutamine = pyridoxal 5'-phosphate + L-glutamate + phosphate + 3 H2O + H(+). The enzyme catalyses L-glutamine + H2O = L-glutamate + NH4(+). The protein operates within cofactor biosynthesis; pyridoxal 5'-phosphate biosynthesis. Its function is as follows. Catalyzes the hydrolysis of glutamine to glutamate and ammonia as part of the biosynthesis of pyridoxal 5'-phosphate. The resulting ammonia molecule is channeled to the active site of PdxS. This is Pyridoxal 5'-phosphate synthase subunit PdxT from Saccharolobus islandicus (strain M.16.27) (Sulfolobus islandicus).